Consider the following 214-residue polypeptide: 3-isopropylmalate dehydratase small subunit (214 aa).

It belongs to the LeuD family. LeuD type 1 subfamily. In terms of assembly, heterodimer of LeuC and LeuD.

The enzyme catalyses (2R,3S)-3-isopropylmalate = (2S)-2-isopropylmalate. It participates in amino-acid biosynthesis; L-leucine biosynthesis; L-leucine from 3-methyl-2-oxobutanoate: step 2/4. In terms of biological role, catalyzes the isomerization between 2-isopropylmalate and 3-isopropylmalate, via the formation of 2-isopropylmaleate. This chain is 3-isopropylmalate dehydratase small subunit, found in Pseudomonas putida (strain W619).